A 71-amino-acid polypeptide reads, in one-letter code: Conotoxin Tx11.3 (71 aa).

The signal sequence occupies residues 1–19; the sequence is MKLCVTFLLVLVILPSVTG. Positions 20-47 are excised as a propeptide; it reads VKSSERTLSGAALRGDRGTCSGRGQECK. 4 disulfide bridges follow: Cys-39/Cys-53, Cys-46/Cys-58, Cys-52/Cys-63, and Cys-57/Cys-70.

It belongs to the I1 superfamily. In terms of tissue distribution, expressed by the venom duct.

The protein resides in the secreted. This is Conotoxin Tx11.3 from Conus textile (Cloth-of-gold cone).